A 72-amino-acid polypeptide reads, in one-letter code: Variant surface glycoprotein MITAT 1.1000BC (72 aa).

Residue Asp50 is the site of GPI-anchor amidated aspartate attachment. Residues 51 to 72 (GSFLVNKKFALMVYDFVSLLAF) constitute a propeptide, removed in mature form.

The protein localises to the cell membrane. In terms of biological role, VSG forms a coat on the surface of the parasite. The trypanosome evades the immune response of the host by expressing a series of antigenically distinct VSGs from an estimated 1000 VSG genes. The protein is Variant surface glycoprotein MITAT 1.1000BC of Trypanosoma brucei brucei.